A 259-amino-acid polypeptide reads, in one-letter code: Expansin-B4 (259 aa).

Positions 1 to 23 (MASSQRYFALLALFAVSLKFCYC) are cleaved as a signal peptide. A glycan (N-linked (GlcNAc...) asparagine) is linked at N25. In terms of domain architecture, Expansin-like EG45 spans 51 to 161 (GGACGYGSAV…KRAACLYRGT (111 aa)). Intrachain disulfides connect C54–C83, C86–C156, and C91–C97. The Expansin-like CBD domain maps to 174–255 (YYISFVVEYE…NWKPDESYRS (82 aa)).

Belongs to the expansin family. Expansin B subfamily.

The protein resides in the secreted. It is found in the cell wall. The protein localises to the membrane. Functionally, may cause loosening and extension of plant cell walls by disrupting non-covalent bonding between cellulose microfibrils and matrix glucans. No enzymatic activity has been found. This chain is Expansin-B4 (EXPB4), found in Arabidopsis thaliana (Mouse-ear cress).